The chain runs to 800 residues: Ribosome-releasing factor 2, mitochondrial (800 aa).

Residues 21 to 307 (SKVRNIGIIA…AIANYLPSPS (287 aa)) enclose the tr-type G domain. Residues 30 to 37 (AHIDAGKT), 95 to 99 (DTPGH), and 147 to 150 (NKMD) each bind GTP.

Belongs to the TRAFAC class translation factor GTPase superfamily. Classic translation factor GTPase family. EF-G/EF-2 subfamily.

It is found in the mitochondrion. Mitochondrial GTPase that mediates the disassembly of ribosomes from messenger RNA at the termination of mitochondrial protein biosynthesis. Not involved in the GTP-dependent ribosomal translocation step during translation elongation. In Kluyveromyces lactis (strain ATCC 8585 / CBS 2359 / DSM 70799 / NBRC 1267 / NRRL Y-1140 / WM37) (Yeast), this protein is Ribosome-releasing factor 2, mitochondrial.